The chain runs to 105 residues: Large ribosomal subunit protein bL21 (105 aa).

It belongs to the bacterial ribosomal protein bL21 family. As to quaternary structure, part of the 50S ribosomal subunit. Contacts protein L20.

In terms of biological role, this protein binds to 23S rRNA in the presence of protein L20. This Desulfatibacillum aliphaticivorans protein is Large ribosomal subunit protein bL21.